The following is a 123-amino-acid chain: Large ribosomal subunit protein bL12 (123 aa).

The protein belongs to the bacterial ribosomal protein bL12 family. Homodimer. Part of the ribosomal stalk of the 50S ribosomal subunit. Forms a multimeric L10(L12)X complex, where L10 forms an elongated spine to which 2 to 4 L12 dimers bind in a sequential fashion. Binds GTP-bound translation factors.

Forms part of the ribosomal stalk which helps the ribosome interact with GTP-bound translation factors. Is thus essential for accurate translation. This chain is Large ribosomal subunit protein bL12, found in Marinomonas sp. (strain MWYL1).